The chain runs to 244 residues: Ubiquinone/menaquinone biosynthesis C-methyltransferase UbiE (244 aa).

S-adenosyl-L-methionine-binding positions include threonine 70, aspartate 91, and 117–118; that span reads DA.

This sequence belongs to the class I-like SAM-binding methyltransferase superfamily. MenG/UbiE family.

It catalyses the reaction a 2-demethylmenaquinol + S-adenosyl-L-methionine = a menaquinol + S-adenosyl-L-homocysteine + H(+). The enzyme catalyses a 2-methoxy-6-(all-trans-polyprenyl)benzene-1,4-diol + S-adenosyl-L-methionine = a 5-methoxy-2-methyl-3-(all-trans-polyprenyl)benzene-1,4-diol + S-adenosyl-L-homocysteine + H(+). Its pathway is quinol/quinone metabolism; menaquinone biosynthesis; menaquinol from 1,4-dihydroxy-2-naphthoate: step 2/2. The protein operates within cofactor biosynthesis; ubiquinone biosynthesis. Functionally, methyltransferase required for the conversion of demethylmenaquinol (DMKH2) to menaquinol (MKH2) and the conversion of 2-polyprenyl-6-methoxy-1,4-benzoquinol (DDMQH2) to 2-polyprenyl-3-methyl-6-methoxy-1,4-benzoquinol (DMQH2). The chain is Ubiquinone/menaquinone biosynthesis C-methyltransferase UbiE from Laribacter hongkongensis (strain HLHK9).